A 342-amino-acid chain; its full sequence is Heparan sulfate glucosamine 3-O-sulfotransferase 6 (342 aa).

Positions 1–21 are disordered; that stretch reads MAGSGGLGGGAGGGQGAGAGQ. At 1–31 the chain is on the cytoplasmic side; the sequence is MAGSGGLGGGAGGGQGAGAGQGAALRASRAP. Residues 32–49 form a helical; Signal-anchor for type II membrane protein membrane-spanning segment; sequence MLLVALVLGAYCLCALPG. Residues 50-342 lie on the Lumenal side of the membrane; the sequence is RCPPAARAPA…QMTGQDFGWG (293 aa). Positions 55-85 are disordered; it reads ARAPAPAPAPSEPSSSVHRPGAPGLPLASGP. Over residues 66 to 85 the composition is skewed to low complexity; it reads EPSSSVHRPGAPGLPLASGP. 3'-phosphoadenylyl sulfate is bound at residue 100–104; sequence KGGTR. Substrate contacts are provided by residues 122–128 and 153–156; these read EPHFFDR and KTPS. 3'-phosphoadenylyl sulfate contacts are provided by R181 and S189. A substrate-binding site is contributed by 220 to 221; sequence WS. Residue N281 is glycosylated (N-linked (GlcNAc...) asparagine). C288 and C300 are oxidised to a cystine. Residue 305–309 coordinates 3'-phosphoadenylyl sulfate; sequence KGRPH.

The protein belongs to the sulfotransferase 1 family.

The protein localises to the golgi apparatus membrane. It carries out the reaction alpha-D-glucosaminyl-[heparan sulfate](n) + 3'-phosphoadenylyl sulfate = 3-sulfo-alpha-D-glucosaminyl-[heparan sulfate](n) + adenosine 3',5'-bisphosphate + H(+). Its function is as follows. Sulfotransferase that utilizes 3'-phospho-5'-adenylyl sulfate (PAPS) to catalyze the transfer of a sulfo group to heparan sulfate. The substrate-specific O-sulfation generates an enzyme-modified heparan sulfate which acts as a binding receptor to Herpes Simplex Virus-1 (HSV-1) and permits its entry. Unlike 3-OST-1, does not convert non-anticoagulant heparan sulfate to anticoagulant heparan sulfate. This chain is Heparan sulfate glucosamine 3-O-sulfotransferase 6 (HS3ST6), found in Homo sapiens (Human).